A 434-amino-acid polypeptide reads, in one-letter code: Histidinol dehydrogenase (434 aa).

Residues Ser-242, Gln-264, and His-267 each contribute to the substrate site. Gln-264 and His-267 together coordinate Zn(2+). Catalysis depends on proton acceptor residues Glu-332 and His-333. Substrate is bound by residues His-333, Asp-366, Glu-420, and His-425. A Zn(2+)-binding site is contributed by Asp-366. Zn(2+) is bound at residue His-425.

Belongs to the histidinol dehydrogenase family. The cofactor is Zn(2+).

The enzyme catalyses L-histidinol + 2 NAD(+) + H2O = L-histidine + 2 NADH + 3 H(+). Its pathway is amino-acid biosynthesis; L-histidine biosynthesis; L-histidine from 5-phospho-alpha-D-ribose 1-diphosphate: step 9/9. Functionally, catalyzes the sequential NAD-dependent oxidations of L-histidinol to L-histidinaldehyde and then to L-histidine. The sequence is that of Histidinol dehydrogenase from Oleidesulfovibrio alaskensis (strain ATCC BAA-1058 / DSM 17464 / G20) (Desulfovibrio alaskensis).